Consider the following 92-residue polypeptide: Small ribosomal subunit protein uS19c (92 aa).

The protein belongs to the universal ribosomal protein uS19 family.

The protein localises to the plastid. It localises to the chloroplast. In terms of biological role, protein S19 forms a complex with S13 that binds strongly to the 16S ribosomal RNA. The chain is Small ribosomal subunit protein uS19c (rps19) from Porphyra purpurea (Red seaweed).